The sequence spans 412 residues: 43 kDa receptor-associated protein of the synapse (412 aa).

Glycine 2 is lipidated: N-myristoyl glycine. 7 TPR repeats span residues 6-39 (TKQQ…SADP), 83-116 (TEGY…QGTT), 123-156 (GQVS…AHNN), 163-196 (CRVC…VNDY), 206-239 (AMSQ…ALQH), 246-279 (ALCL…MTEI), and 286-319 (IQVL…AEGL). At tyrosine 196 the chain carries Phosphotyrosine. An RING-type zinc finger spans residues 363 to 403 (CGMCGESIGEKNNQLQALPCSHFFHLKCLQTNGTRGCPNCR).

It belongs to the RAPsyn family. In terms of tissue distribution, expressed in muscle fibers and in neurons.

Its subcellular location is the cell membrane. It localises to the postsynaptic cell membrane. The protein localises to the cytoplasm. It is found in the cytoskeleton. Postsynaptic protein required for clustering of nicotinic acetylcholine receptors (nAChRs) at the neuromuscular junction. It may link the receptor to the underlying postsynaptic cytoskeleton, possibly by direct association with actin or spectrin. The polypeptide is 43 kDa receptor-associated protein of the synapse (RAPSN) (Gallus gallus (Chicken)).